We begin with the raw amino-acid sequence, 715 residues long: ATP-dependent zinc metalloprotease YME1L1 (715 aa).

The interval Val31–Ser54 is disordered. Basic and acidic residues predominate over residues Gln41–Pro52. Residues Ile238–Val258 traverse the membrane as a helical segment. ATP is bound by residues Val283, Thr325, Gly326, Lys327, Thr328, and Leu329. Residue His541 participates in Zn(2+) binding. Glu542 is a catalytic residue. Positions 545 and 619 each coordinate Zn(2+).

The protein in the N-terminal section; belongs to the AAA ATPase family. It in the C-terminal section; belongs to the peptidase M41 family. As to quaternary structure, homohexamer; may also form heterohexamers. Exists in several complexes of 600-1100 kDa. Interacts with AFG1L. Requires Zn(2+) as cofactor. Post-translationally, proteolytically processed by mitochondrial processing peptidase (MPP) to generate the mature form. Degraded in an OMA1-dependent manner in response to oxidative stress.

Its subcellular location is the mitochondrion inner membrane. It is found in the mitochondrion. The catalysed reaction is ATP + H2O = ADP + phosphate + H(+). In terms of biological role, ATP-dependent metalloprotease that catalyzes the degradation of folded and unfolded proteins with a suitable degron sequence in the mitochondrial intermembrane region. Plays an important role in regulating mitochondrial morphology and function by cleaving OPA1 at position S2, giving rise to a form of OPA1 that promotes maintenance of normal mitochondrial structure and mitochondrial protein metabolism. Ensures cell proliferation, maintains normal cristae morphology and complex I respiration activity, promotes antiapoptotic activity and protects mitochondria from the accumulation of oxidatively damaged membrane proteins. Required to control the accumulation of nonassembled respiratory chain subunits (NDUFB6, OX4 and ND1). Involved in the mitochondrial adaptation in response to various signals, such as stress or developmental cues, by mediating degradation of mitochondrial proteins to rewire the mitochondrial proteome. Catalyzes degradation of mitochondrial proteins, such as translocases, lipid transfer proteins and metabolic enzymes in response to nutrient starvation in order to limit mitochondrial biogenesis: mechanistically, YME1L is activated by decreased phosphatidylethanolamine levels caused by LPIN1 activity in response to mTORC1 inhibition. Acts as a regulator of adult neural stem cell self-renewal by promoting mitochondrial proteome rewiring, preserving neural stem and progenitor cells self-renewal. Required for normal, constitutive degradation of PRELID1. Catalyzes the degradation of OMA1 in response to membrane depolarization. Mediates degradation of TIMM17A downstream of the integrated stress response (ISR). Catalyzes degradation of MICU1 when MICU1 is not assembled via an interchain disulfide. The protein is ATP-dependent zinc metalloprotease YME1L1 (Yme1l1) of Rattus norvegicus (Rat).